A 244-amino-acid polypeptide reads, in one-letter code: Acetoacetate decarboxylase (244 aa).

The active-site Schiff-base intermediate with acetoacetate is Lys-115.

It belongs to the ADC family. Homododecamer.

The enzyme catalyses acetoacetate + H(+) = acetone + CO2. Functionally, catalyzes the conversion of acetoacetate to acetone and carbon dioxide. This chain is Acetoacetate decarboxylase, found in Clostridium acetobutylicum (strain ATCC 824 / DSM 792 / JCM 1419 / IAM 19013 / LMG 5710 / NBRC 13948 / NRRL B-527 / VKM B-1787 / 2291 / W).